We begin with the raw amino-acid sequence, 299 residues long: UTP--glucose-1-phosphate uridylyltransferase (299 aa).

Belongs to the UDPGP type 2 family.

The catalysed reaction is alpha-D-glucose 1-phosphate + UTP + H(+) = UDP-alpha-D-glucose + diphosphate. The protein operates within carbohydrate metabolism; nucleotide-sugar metabolism. It participates in capsule biogenesis; capsule polysaccharide biosynthesis. The polypeptide is UTP--glucose-1-phosphate uridylyltransferase (cap4C) (Streptococcus pneumoniae serotype 4 (strain ATCC BAA-334 / TIGR4)).